We begin with the raw amino-acid sequence, 431 residues long: UDP-N-acetylglucosamine--N-acetylmuramyl-(pentapeptide) pyrophosphoryl-undecaprenol N-acetylglucosamine transferase (431 aa).

Residues 29–31 (TGG), N141, R177, S205, I258, and Q303 contribute to the UDP-N-acetyl-alpha-D-glucosamine site. Residues 370-431 (AGSGDGQPPA…NPGASAGGAP (62 aa)) form a disordered region. The segment covering 395–420 (KQGSMQTSVNGDRSAQLIATNPQSRL) has biased composition (polar residues).

This sequence belongs to the glycosyltransferase 28 family. MurG subfamily.

The protein localises to the cell inner membrane. It catalyses the reaction di-trans,octa-cis-undecaprenyl diphospho-N-acetyl-alpha-D-muramoyl-L-alanyl-D-glutamyl-meso-2,6-diaminopimeloyl-D-alanyl-D-alanine + UDP-N-acetyl-alpha-D-glucosamine = di-trans,octa-cis-undecaprenyl diphospho-[N-acetyl-alpha-D-glucosaminyl-(1-&gt;4)]-N-acetyl-alpha-D-muramoyl-L-alanyl-D-glutamyl-meso-2,6-diaminopimeloyl-D-alanyl-D-alanine + UDP + H(+). Its pathway is cell wall biogenesis; peptidoglycan biosynthesis. Its function is as follows. Cell wall formation. Catalyzes the transfer of a GlcNAc subunit on undecaprenyl-pyrophosphoryl-MurNAc-pentapeptide (lipid intermediate I) to form undecaprenyl-pyrophosphoryl-MurNAc-(pentapeptide)GlcNAc (lipid intermediate II). This chain is UDP-N-acetylglucosamine--N-acetylmuramyl-(pentapeptide) pyrophosphoryl-undecaprenol N-acetylglucosamine transferase, found in Xanthomonas euvesicatoria pv. vesicatoria (strain 85-10) (Xanthomonas campestris pv. vesicatoria).